Reading from the N-terminus, the 527-residue chain is Zinc finger C2HC domain-containing protein 1C (527 aa).

Disordered regions lie at residues His-18–Lys-105 and Val-145–Ser-170. Residues Asn-50–Glu-61 are compositionally biased toward polar residues. Residues Arg-71–Cys-85 show a composition bias toward basic residues. Low complexity predominate over residues Gln-93–Gly-102. Residues Thr-207–Gln-254 are a coiled coil. 2 disordered regions span residues Leu-264–Tyr-316 and Leu-352–Leu-379. Over residues Phe-286–Asp-298 the composition is skewed to basic and acidic residues. Residues Cys-301 to Gln-312 are compositionally biased toward polar residues. The span at Glu-358–Thr-374 shows a compositional bias: low complexity. C2HC/C3H-type zinc fingers lie at residues Glu-378 to Ser-407 and Asp-489 to Arg-518. Zn(2+) is bound by residues Cys-382, Cys-385, His-397, Cys-401, Cys-493, Cys-496, His-508, and Cys-512. The segment at Arg-507 to Ser-527 is disordered.

It belongs to the ZC2HC1 family. Zn(2+) serves as cofactor.

This chain is Zinc finger C2HC domain-containing protein 1C (Zc2hc1c), found in Mus musculus (Mouse).